Here is a 400-residue protein sequence, read N- to C-terminus: Enoyl-[acyl-carrier-protein] reductase [NADH] (400 aa).

NAD(+) is bound by residues 48-53 (GASTGY), 74-75 (FE), 111-112 (DA), and 139-140 (LA). Tyr225 contributes to the substrate binding site. Tyr235 acts as the Proton donor in catalysis. Residues Lys244 and 273–275 (VVT) each bind NAD(+).

Belongs to the TER reductase family. In terms of assembly, monomer.

The enzyme catalyses a 2,3-saturated acyl-[ACP] + NAD(+) = a (2E)-enoyl-[ACP] + NADH + H(+). It participates in lipid metabolism; fatty acid biosynthesis. Involved in the final reduction of the elongation cycle of fatty acid synthesis (FAS II). Catalyzes the reduction of a carbon-carbon double bond in an enoyl moiety that is covalently linked to an acyl carrier protein (ACP). The chain is Enoyl-[acyl-carrier-protein] reductase [NADH] from Burkholderia ambifaria (strain ATCC BAA-244 / DSM 16087 / CCUG 44356 / LMG 19182 / AMMD) (Burkholderia cepacia (strain AMMD)).